The sequence spans 215 residues: 3-isopropylmalate dehydratase small subunit (215 aa).

Belongs to the LeuD family. LeuD type 1 subfamily. In terms of assembly, heterodimer of LeuC and LeuD.

It catalyses the reaction (2R,3S)-3-isopropylmalate = (2S)-2-isopropylmalate. It functions in the pathway amino-acid biosynthesis; L-leucine biosynthesis; L-leucine from 3-methyl-2-oxobutanoate: step 2/4. Catalyzes the isomerization between 2-isopropylmalate and 3-isopropylmalate, via the formation of 2-isopropylmaleate. The chain is 3-isopropylmalate dehydratase small subunit from Ectopseudomonas mendocina (strain ymp) (Pseudomonas mendocina).